A 249-amino-acid polypeptide reads, in one-letter code: Voltage-gated potassium channel subunit beta-3 (249 aa).

NADP(+)-binding residues include Asn-44, Ser-74, Arg-75, Gln-100, Trp-129, Ser-130, Pro-131, Leu-132, Ala-133, Cys-134, Lys-140, Lys-150, Gly-209, Ser-211, Gln-215, and Glu-218.

Belongs to the shaker potassium channel beta subunit family. As to quaternary structure, forms heteromultimeric complex with alpha subunits. Interacts with KCNA5 and KCNB2. Strong expression in brain, with highest levels in neocortical and allocortical regions, hippocampus, olfactory bulb and cerebellum. Also strong in kidney. Weak expression in lung, skeletal muscle and heart.

It is found in the cytoplasm. Its function is as follows. Regulatory subunit of the voltage-gated potassium (Kv) channels composed of pore-forming and potassium-conducting alpha subunits and of regulatory beta subunit. The beta-3/KCNAB3 subunit may mediate closure of potassium channels. Enhances the expression of Kv2.2/KCNB2 alpha subunit-containing Kv channels but not Kv2.1/KCNB1. May display nicotinamide adenine dinucleotide phosphate (NADPH)-dependent aldoketoreductase activity. The binding of oxidized and reduced NADP(H) cofactors may be required for the regulation of potassium channel activity. The polypeptide is Voltage-gated potassium channel subunit beta-3 (Mus musculus (Mouse)).